We begin with the raw amino-acid sequence, 769 residues long: Wall-associated receptor kinase-like 10 (769 aa).

Residues 1-24 (MSSNCSCSLLSLFSLLLIIDLTVA) form the signal peptide. Residues 25 to 358 (SSCPKTCGGI…YTCEYTNHRP (334 aa)) are Extracellular-facing. N-linked (GlcNAc...) asparagine glycosylation is found at Asn58, Asn114, Asn134, Asn182, Asn187, Asn237, Asn262, and Asn296. The interval 291-351 (CLCDYNSTTT…CVNLLGGYTC (61 aa)) is atypical EGF-like. Intrachain disulfides connect Cys293/Cys305, Cys327/Cys342, and Cys337/Cys351. Residues 359–379 (LVIGLSTSFSTLVFIGGIYWL) traverse the membrane as a helical segment. The Cytoplasmic portion of the chain corresponds to 380–769 (YKFIRRQRRL…RSDVEPLFPR (390 aa)). Residues 433-718 (FSLTRILGEG…SYSEDMQPYE (286 aa)) form the Protein kinase domain. Residues 439-447 (LGEGGQGTV) and Lys461 each bind ATP. Tyr506 carries the phosphotyrosine modification. Asp559 acts as the Proton acceptor in catalysis. 2 positions are modified to phosphothreonine: Thr593 and Thr598. Residue Tyr606 is modified to Phosphotyrosine.

It belongs to the protein kinase superfamily. Ser/Thr protein kinase family.

Its subcellular location is the membrane. It catalyses the reaction L-seryl-[protein] + ATP = O-phospho-L-seryl-[protein] + ADP + H(+). The catalysed reaction is L-threonyl-[protein] + ATP = O-phospho-L-threonyl-[protein] + ADP + H(+). Functionally, serine/threonine-protein kinase that may function as a signaling receptor of extracellular matrix component. The protein is Wall-associated receptor kinase-like 10 (WAKL10) of Arabidopsis thaliana (Mouse-ear cress).